The sequence spans 305 residues: Homoserine O-acetyltransferase (305 aa).

Cys-142 acts as the Acyl-thioester intermediate in catalysis. Residues Lys-163 and Ser-192 each coordinate substrate. His-233 acts as the Proton acceptor in catalysis. Residue Glu-235 is part of the active site. Arg-247 lines the substrate pocket.

The protein belongs to the MetA family.

It is found in the cytoplasm. The enzyme catalyses L-homoserine + acetyl-CoA = O-acetyl-L-homoserine + CoA. It functions in the pathway amino-acid biosynthesis; L-methionine biosynthesis via de novo pathway; O-acetyl-L-homoserine from L-homoserine: step 1/1. In terms of biological role, transfers an acetyl group from acetyl-CoA to L-homoserine, forming acetyl-L-homoserine. This Methanomassiliicoccus intestinalis (strain Issoire-Mx1) protein is Homoserine O-acetyltransferase.